The following is a 176-amino-acid chain: Peptidoglycan-associated lipoprotein (176 aa).

The first 32 residues, 1-32 (MSRIDTPAASRMQTIARNPVMIALVMTLALAG), serve as a signal peptide directing secretion. A lipid anchor (N-palmitoyl cysteine) is attached at Cys33. Residue Cys33 is the site of S-diacylglycerol cysteine attachment. An OmpA-like domain is found at 58-175 (QQDFTVNVGD…RAVTVLGGAG (118 aa)).

It belongs to the Pal lipoprotein family. In terms of assembly, the Tol-Pal system is composed of five core proteins: the inner membrane proteins TolA, TolQ and TolR, the periplasmic protein TolB and the outer membrane protein Pal. They form a network linking the inner and outer membranes and the peptidoglycan layer.

It localises to the cell outer membrane. Its function is as follows. Part of the Tol-Pal system, which plays a role in outer membrane invagination during cell division and is important for maintaining outer membrane integrity. The protein is Peptidoglycan-associated lipoprotein of Rhizobium meliloti (strain 1021) (Ensifer meliloti).